We begin with the raw amino-acid sequence, 418 residues long: Putative ion-transport protein YfeO (418 aa).

12 consecutive transmembrane segments (helical) span residues 10 to 30 (LLLS…LIVV), 54 to 74 (DSPL…GLVI), 99 to 119 (ALPG…SLGP), 120 to 140 (EHPI…RLLP), 149 to 169 (ILAS…AALI), 186 to 206 (LFAP…FFHP), 223 to 243 (ILSG…AVWC), 258 to 278 (VLVL…GGPV), 300 to 320 (DYFL…ASGF), 322 to 342 (GGRI…LHEH), 343 to 363 (VPAV…VLVV), and 371 to 391 (LFMA…CIVM).

Belongs to the chloride channel (TC 2.A.49) family.

The protein resides in the cell membrane. The chain is Putative ion-transport protein YfeO from Escherichia coli (strain 55989 / EAEC).